The sequence spans 464 residues: Lysosomal proton-coupled steroid conjugate and bile acid symporter SLC46A3 (464 aa).

A signal peptide spans M1 to Q26. Topologically, residues Q27 to S71 are extracellular. N-linked (GlcNAc...) asparagine glycans are attached at residues N39, N47, and N54. The chain crosses the membrane as a helical span at residues F72–I92. Topologically, residues V93–S104 are cytoplasmic. Residues L105 to F125 form a helical membrane-spanning segment. Over S126–S130 the chain is Extracellular. The chain crosses the membrane as a helical span at residues V131–G151. The Cytoplasmic segment spans residues G152–A171. Residues V172 to L192 form a helical membrane-spanning segment. Residues R193–T198 are Extracellular-facing. A helical membrane pass occupies residues W199–L219. Topologically, residues Q220–R259 are cytoplasmic. The helical transmembrane segment at I260–S280 threads the bilayer. Topologically, residues S281–E296 are extracellular. The helical transmembrane segment at V297–V317 threads the bilayer. At Y318–D326 the chain is on the cytoplasmic side. The chain crosses the membrane as a helical span at residues I327–A347. Residues K348–T349 are Extracellular-facing. A helical transmembrane segment spans residues T350–L370. The Cytoplasmic segment spans residues R371–G384. Residues A385–F405 form a helical membrane-spanning segment. Residues N406–G418 lie on the Extracellular side of the membrane. The helical transmembrane segment at F419–L439 threads the bilayer. The Cytoplasmic segment spans residues C440–S464.

This sequence belongs to the major facilitator superfamily. SLC46A family.

It localises to the lysosome membrane. It carries out the reaction estrone 3-sulfate(out) + n H(+)(out) = estrone 3-sulfate(in) + n H(+)(in). The catalysed reaction is 25-hydroxyvitamin D3 sulfate(out) + n H(+)(out) = 25-hydroxyvitamin D3 sulfate(in) + n H(+)(in). It catalyses the reaction cholate(out) + n H(+)(out) = cholate(in) + n H(+)(in). The enzyme catalyses glycocholate(out) + n H(+)(out) = glycocholate(in) + n H(+)(in). It carries out the reaction taurocholate(out) + n H(+)(out) = taurocholate(in) + n H(+)(in). The catalysed reaction is dehydroepiandrosterone 3-sulfate(out) + n H(+)(out) = dehydroepiandrosterone 3-sulfate(in) + n H(+)(in). Its function is as follows. Lysosomal proton-coupled steroid conjugate and bile acid transporter. Preferentially recognizes lipophilic steroid conjugates or bile acis as endogenous substrates and seems to mediate escape from lysosomes to the cytoplasm. Modulates hepatic cytosolic copper homeostasis, maybe acting as a lysosomal copper transporter and sequestering copper ions in the lysosome. The protein is Lysosomal proton-coupled steroid conjugate and bile acid symporter SLC46A3 (SLC46A3) of Gallus gallus (Chicken).